A 109-amino-acid chain; its full sequence is UPF0060 membrane protein RC1_3291 (109 aa).

The next 4 membrane-spanning stretches (helical) occupy residues 4-24, 31-51, 59-79, and 88-108; these read IATYLLAAVAEIGGCFAFWAW, PLWLIPGMASLALFAWALTRI, AYAAYGGIYILTSLVWMWLVE, and TLGTVLCVSGALVIIFGPRGG.

It belongs to the UPF0060 family.

It localises to the cell inner membrane. The polypeptide is UPF0060 membrane protein RC1_3291 (Rhodospirillum centenum (strain ATCC 51521 / SW)).